We begin with the raw amino-acid sequence, 204 residues long: Ribosome maturation factor RimP (204 aa).

A disordered region spans residues 176–204 (GNFDESQFDEIEESEGEEADEAEQPPTKH). Over residues 181–198 (SQFDEIEESEGEEADEAE) the composition is skewed to acidic residues.

The protein belongs to the RimP family.

Its subcellular location is the cytoplasm. Functionally, required for maturation of 30S ribosomal subunits. The sequence is that of Ribosome maturation factor RimP from Cereibacter sphaeroides (strain ATCC 17029 / ATH 2.4.9) (Rhodobacter sphaeroides).